The primary structure comprises 185 residues: A-type ATP synthase subunit E (185 aa).

It belongs to the V-ATPase E subunit family. As to quaternary structure, has multiple subunits with at least A(3), B(3), C, D, E, F, H, I and proteolipid K(x).

The protein resides in the cell membrane. Functionally, component of the A-type ATP synthase that produces ATP from ADP in the presence of a proton gradient across the membrane. This Thermoplasma volcanium (strain ATCC 51530 / DSM 4299 / JCM 9571 / NBRC 15438 / GSS1) protein is A-type ATP synthase subunit E.